Consider the following 206-residue polypeptide: Small ribosomal subunit protein uS4 (206 aa).

The S4 RNA-binding domain maps to 96-157 (SRLDNVVYRM…KAKKQVRIQE (62 aa)).

This sequence belongs to the universal ribosomal protein uS4 family. In terms of assembly, part of the 30S ribosomal subunit. Contacts protein S5. The interaction surface between S4 and S5 is involved in control of translational fidelity.

Its function is as follows. One of the primary rRNA binding proteins, it binds directly to 16S rRNA where it nucleates assembly of the body of the 30S subunit. Functionally, with S5 and S12 plays an important role in translational accuracy. The protein is Small ribosomal subunit protein uS4 of Neisseria gonorrhoeae (strain ATCC 700825 / FA 1090).